The following is a 152-amino-acid chain: Deoxyuridine 5'-triphosphate nucleotidohydrolase (152 aa).

Substrate is bound by residues 71 to 73, Asn84, 88 to 90, and Met98; these read RSG and LID.

The protein belongs to the dUTPase family. The cofactor is Mg(2+).

It carries out the reaction dUTP + H2O = dUMP + diphosphate + H(+). Its pathway is pyrimidine metabolism; dUMP biosynthesis; dUMP from dCTP (dUTP route): step 2/2. This enzyme is involved in nucleotide metabolism: it produces dUMP, the immediate precursor of thymidine nucleotides and it decreases the intracellular concentration of dUTP so that uracil cannot be incorporated into DNA. In Coxiella burnetii (strain Dugway 5J108-111), this protein is Deoxyuridine 5'-triphosphate nucleotidohydrolase.